The sequence spans 61 residues: Photosystem II reaction center protein K (61 aa).

Positions 1 to 24 (MPNILSLTCICFNSVIYPTSFFFA) are excised as a propeptide. The chain crosses the membrane as a helical span at residues 32–52 (IFNPIVDFMPVIPVLFFLLAF).

It belongs to the PsbK family. In terms of assembly, PSII is composed of 1 copy each of membrane proteins PsbA, PsbB, PsbC, PsbD, PsbE, PsbF, PsbH, PsbI, PsbJ, PsbK, PsbL, PsbM, PsbT, PsbX, PsbY, PsbZ, Psb30/Ycf12, at least 3 peripheral proteins of the oxygen-evolving complex and a large number of cofactors. It forms dimeric complexes.

It localises to the plastid. It is found in the chloroplast thylakoid membrane. In terms of biological role, one of the components of the core complex of photosystem II (PSII). PSII is a light-driven water:plastoquinone oxidoreductase that uses light energy to abstract electrons from H(2)O, generating O(2) and a proton gradient subsequently used for ATP formation. It consists of a core antenna complex that captures photons, and an electron transfer chain that converts photonic excitation into a charge separation. The protein is Photosystem II reaction center protein K of Oryza nivara (Indian wild rice).